A 682-amino-acid chain; its full sequence is Zinc finger protein 16 (682 aa).

2 stretches are compositionally biased toward basic and acidic residues: residues 1–10 and 113–125; these read MPSLRTRREE and VSER…EGRR. 2 disordered regions span residues 1-33 and 112-134; these read MPSL…HVSD and DVSE…SQEG. Residues 62 to 210 are necessary for transcription activation; it reads YQQPDCDTRT…GVPTAESPLI (149 aa). The C2H2-type 1; degenerate zinc-finger motif lies at 209-231; it reads LICNECGKTFQGNPDLIQCQIVH. The C2H2-type 2; degenerate zinc-finger motif lies at 237–259; that stretch reads FMCDDCGKTFSQNSVLKNHHRSH. A Glycyl lysine isopeptide (Lys-Gly) (interchain with G-Cter in SUMO2) cross-link involves residue Lys253. C2H2-type zinc fingers lie at residues 265-287, 293-315, 321-343, 349-371, 377-399, 405-427, 433-455, and 461-483; these read YQCS…QSHH, YMCN…QKSH, YECN…QRIH, YVCS…HRTH, FECG…QRVH, YECN…HRVH, YKCS…RRIH, and HVCN…QIIH. Required for nuclear localization regions lie at residues 268–393 and 341–373; these read SECG…AHLR and RIHS…THTG. The segment at 473-503 is required for nuclear localization; the sequence is SSVLRKHQIIHTGEKPYRCSVCGKAFSHSSA. Lys487 bears the N6-acetyllysine mark. 7 C2H2-type zinc fingers span residues 489 to 511, 517 to 539, 545 to 567, 573 to 595, 601 to 623, 629 to 651, and 657 to 679; these read YRCS…QGVH, YACH…QRVH, YECT…QRIH, HECN…QKVH, YTCV…QIIH, YKCS…QRIH, and YDCA…QLIH.

This sequence belongs to the krueppel C2H2-type zinc-finger protein family. Interacts with INCA1; the interaction inhibits INCA1 activity and induces the cell cycle process.

The protein resides in the nucleus. Its function is as follows. Acts as a transcriptional activator. Promotes cell proliferation by facilitating the cell cycle phase transition from the S to G2/M phase. Involved in both the hemin- and phorbol myristate acetate (PMA)-induced erythroid and megakaryocytic differentiation, respectively. Also plays a role as an inhibitor of cell apoptosis. This chain is Zinc finger protein 16 (ZNF16), found in Gorilla gorilla gorilla (Western lowland gorilla).